A 238-amino-acid polypeptide reads, in one-letter code: Probable 2-phosphosulfolactate phosphatase (238 aa).

Belongs to the ComB family. Requires Mg(2+) as cofactor.

The catalysed reaction is (2R)-O-phospho-3-sulfolactate + H2O = (2R)-3-sulfolactate + phosphate. The protein is Probable 2-phosphosulfolactate phosphatase of Clostridium beijerinckii (strain ATCC 51743 / NCIMB 8052) (Clostridium acetobutylicum).